A 614-amino-acid chain; its full sequence is MTPSLSLGQRLDDRYLIQLHLGQNSLGQQYLAQDTHRFDEPCTITVLTAPPGDKAGNLFKQQAEILYALDHPQIANFREFFALGSELYLVQDFIEGQSYFDLLKDRRLQGKAFTELEVRQWCRQLLPVLHYLHIQKICHGQISPSSIMRRTVDGLPVLVDFTHSQYYSGTPGEDRRDLHGLGLGAIALLTGEVNPNPPWENLLSSVALSQEFRQLLLKLLAWPPLVDWPTLTDNLNNLPQHFLPTVAEFNLTSTIPEQTDNGVGKSSTGEPPFPTVHQSPESSSSAKVKNMVRVDGLKGLVKKSFILLGLMAIAMALGWGAGQLWLDNQQRAALEKLAQEEPGDDVPEKTDLEIKNEIRARRLNLGISPQRFQTLMDDGLAFQLGIDPQQRLEKNPNTNGAPLSLGSPEQQMAMTITVLDALESLSREATRDFAQNNSGDRRRWIPRVNQLRLSSRSFYDLVNARFHHYLPMVSPALLGEPEFEQRPLAQVWNAMAFDSLASLEDESHYQRLSFDDTNQLNLNGTLEPGEGYAYAVTIPPTEEFSLQLTAPPTARISFYPPTGPEVILQNSAMHRWSGPTDQAGYYELVITSVAEEPIAFELELSIIPASAQPF.

Residues 15 to 404 (YLIQLHLGQN…NPNTNGAPLS (390 aa)) enclose the Protein kinase domain. 21–29 (LGQNSLGQQ) serves as a coordination point for ATP. Over residues 256-269 (PEQTDNGVGKSSTG) the composition is skewed to polar residues. The tract at residues 256 to 284 (PEQTDNGVGKSSTGEPPFPTVHQSPESSS) is disordered.

The protein belongs to the protein kinase superfamily. Ser/Thr protein kinase family.

In terms of biological role, lacks protein kinase activity. The chain is Serine/threonine-protein kinase-like protein E (spkE) from Synechocystis sp. (strain ATCC 27184 / PCC 6803 / Kazusa).